Here is a 67-residue protein sequence, read N- to C-terminus: Large ribosomal subunit protein bL35 (67 aa).

The protein belongs to the bacterial ribosomal protein bL35 family.

The chain is Large ribosomal subunit protein bL35 from Gloeothece citriformis (strain PCC 7424) (Cyanothece sp. (strain PCC 7424)).